The chain runs to 163 residues: uncharacterized protein (163 aa).

2 helical membrane passes run Tyr7 to Val27 and Leu51 to Phe71.

It localises to the cell membrane. This is an uncharacterized protein from Rickettsia prowazekii (strain Madrid E).